The sequence spans 681 residues: MSKSKSLAFVIAALSYSFFSLFSSPPKSHYHELFISTSFSDNASVALNLHTLTRRPHVAGTVANAEAAEYVRSVFTSSALKSHVVAYQVSLTYPVHRSLVLTPTDSAKPITFLLEQEKLGDNPYANEVMPTFHGYAKSGNVSGPVVYANYGRVEDFVRLKKDMGVNVSGAVVIARYGQIYRGDIVKNAYEAGAVGVVIYTDKRDYGGDEWFPASKWMPPSGVQVGTVYNGLGDPTTPGWASVDGCERLSDEAVELSGDVPLIPSLPVSAADAEVILKTVVGDVSDGDVYPVGPGPGVLNLSYIGETVIAKIENVIGVIEGEEEPDRYVILGNHRDAWTFGAVDPNSGTAVLMEIAQRLDKLQKRGWKPRRTIILCNWDAEEYGLIGSTEWVEENREMLSSRAVAYLNVDCAVSGPGFHASATPQLDELIKVAAQEVRDPDNATQTIYESWIGSSDSVVIRRLGGGGSDYASFVQHVGVPGVDMSFGRGYPVYHSMYDDFTWMEKFGDPMFQRHVAMASVLGLVALRLADEEIIPFNYTSYALELKKSAEDLENEKLGHNIDVSTLIKSIEDLSTAAKHISLEKEAIKGALKVRELNDRLMMAERALTDRDGLSERPWYKHLIYGPSKYDDYGSKSFPGVDDAIDNAKKLNTKASWENVQHQIWRVSRAIRHASLVLKGELI.

The Cytoplasmic segment spans residues 1–6; that stretch reads MSKSKS. A helical; Signal-anchor for type II membrane protein membrane pass occupies residues 7–24; it reads LAFVIAALSYSFFSLFSS. Residues 25-681 are Extracellular-facing; it reads PPKSHYHELF…ASLVLKGELI (657 aa). Asn42, Asn140, Asn166, and Asn299 each carry an N-linked (GlcNAc...) asparagine glycan. Residues 241–527 form a catalytic region; sequence SVDGCERLSD…SVLGLVALRL (287 aa). Residues His333 and Asp343 each contribute to the Zn(2+) site. Glu380 serves as the catalytic Nucleophile. Zn(2+)-binding residues include Glu381 and Asp409. Asn441 carries N-linked (GlcNAc...) asparagine glycosylation. His493 is a Zn(2+) binding site. The N-linked (GlcNAc...) asparagine glycan is linked to Asn536.

It belongs to the peptidase M28 family. M28B subfamily. Zn(2+) is required as a cofactor.

Its subcellular location is the endoplasmic reticulum membrane. It carries out the reaction Release of an unsubstituted, C-terminal glutamyl residue, typically from Ac-Asp-Glu or folylpoly-gamma-glutamates.. In terms of biological role, acts in association with AMP1 to suppress ectopic stem cell niche formation in the shoot apical meristem (SAM) independently of cytokinin signaling pathway. This Arabidopsis thaliana (Mouse-ear cress) protein is Probable glutamate carboxypeptidase LAMP1.